The primary structure comprises 856 residues: DNA mismatch repair protein MutS (856 aa).

618–625 lines the ATP pocket; the sequence is GPNMGGKS.

Belongs to the DNA mismatch repair MutS family.

Functionally, this protein is involved in the repair of mismatches in DNA. It is possible that it carries out the mismatch recognition step. This protein has a weak ATPase activity. This is DNA mismatch repair protein MutS from Shewanella putrefaciens (strain CN-32 / ATCC BAA-453).